The chain runs to 72 residues: Small ribosomal subunit protein bS20 (72 aa).

The protein belongs to the bacterial ribosomal protein bS20 family.

Its function is as follows. Binds directly to 16S ribosomal RNA. In Proteus mirabilis, this protein is Small ribosomal subunit protein bS20 (rpsT).